An 852-amino-acid chain; its full sequence is Eukaryotic translation initiation factor 3 subunit C (852 aa).

The disordered stretch occupies residues 1 to 90 (MSRFFVSGYP…DSDSDDEGRK (90 aa)). Residues 14–57 (SSEEEDLLSSSEEELLSSESEEDNFSSDSEFGNDSDNDSSDSDS) are compositionally biased toward acidic residues. Residues 597 to 772 (FHMHINLELL…SFVNFTTNDH (176 aa)) enclose the PCI domain. Residues 798–809 (TASNGYSRKQPM) show a composition bias toward polar residues. Positions 798 to 852 (TASNGYSRKQPMQQQQQQQQQQQQQKEQKELLHEENNRFRYANVNANNDEFQTTA) are disordered. Positions 810–822 (QQQQQQQQQQQQQ) are enriched in low complexity. Residues 823-835 (KEQKELLHEENNR) are compositionally biased toward basic and acidic residues. Residues 841–852 (VNANNDEFQTTA) show a composition bias toward polar residues.

Belongs to the eIF-3 subunit C family. In terms of assembly, component of the eukaryotic translation initiation factor 3 (eIF-3) complex.

The protein localises to the cytoplasm. Its function is as follows. Component of the eukaryotic translation initiation factor 3 (eIF-3) complex, which is involved in protein synthesis of a specialized repertoire of mRNAs and, together with other initiation factors, stimulates binding of mRNA and methionyl-tRNAi to the 40S ribosome. The eIF-3 complex specifically targets and initiates translation of a subset of mRNAs involved in cell proliferation. The polypeptide is Eukaryotic translation initiation factor 3 subunit C (Debaryomyces hansenii (strain ATCC 36239 / CBS 767 / BCRC 21394 / JCM 1990 / NBRC 0083 / IGC 2968) (Yeast)).